The primary structure comprises 652 residues: Putative ankyrin repeat protein R734 (652 aa).

ANK repeat units lie at residues 77 to 105 (TNDI…ANNS), 106 to 136 (EGIK…LPTE), 138 to 167 (TLRD…HLGY), 192 to 219 (NDLK…SGYE), 220 to 242 (FDNR…FFMD), 243 to 274 (IGFD…QFTQ), 307 to 337 (INDN…NINR), 396 to 430 (SDNN…DPNY), 468 to 498 (PKLT…TIYS), and 535 to 564 (TNKS…DNNL).

In Acanthamoeba polyphaga mimivirus (APMV), this protein is Putative ankyrin repeat protein R734.